Consider the following 287-residue polypeptide: Probable glucose uptake protein GlcU (287 aa).

9 helical membrane-spanning segments follow: residues 7-29, 34-56, 58-75, 114-136, 156-178, 183-202, 209-228, 233-255, and 267-286; these read LIALLPALFWGSVVLINVFVGGG, IRGTTLGALIVGLGLLITGFAKF, NPTVIIVGLISGALWAFG, WSSMTQIIFGLIAMILLVTGVAL, MGILIVSTVGYVGFVVLGDIFGV, ALFFQSVGMAIGGFILSMNH, TALNLLPGVIWGIGNLFMFY, VGVATSFSLSQLLVIVSTLGGIF, and TGIWVGIIIIVIAAIILGNL.

It belongs to the GRP transporter (TC 2.A.7.5) family.

It localises to the cell membrane. Its function is as follows. Involved in the uptake of glucose. This Staphylococcus aureus (strain MRSA252) protein is Probable glucose uptake protein GlcU (glcU).